A 293-amino-acid polypeptide reads, in one-letter code: Elongation factor Ts (293 aa).

Positions 80-83 (TDFV) are involved in Mg(2+) ion dislocation from EF-Tu.

It belongs to the EF-Ts family.

The protein localises to the cytoplasm. In terms of biological role, associates with the EF-Tu.GDP complex and induces the exchange of GDP to GTP. It remains bound to the aminoacyl-tRNA.EF-Tu.GTP complex up to the GTP hydrolysis stage on the ribosome. The sequence is that of Elongation factor Ts from Staphylococcus aureus (strain Mu3 / ATCC 700698).